The sequence spans 150 residues: Arginine repressor (150 aa).

The protein belongs to the ArgR family.

The protein resides in the cytoplasm. It participates in amino-acid biosynthesis; L-arginine biosynthesis [regulation]. Regulates arginine biosynthesis genes. This is Arginine repressor from Clostridium botulinum (strain ATCC 19397 / Type A).